Consider the following 477-residue polypeptide: Nuclear receptor subfamily 6 group A member 1-A (477 aa).

The segment at residues 40 to 115 (QRSCLICGDR…MGMNRKAIRE (76 aa)) is a DNA-binding region (nuclear receptor). NR C4-type zinc fingers lie at residues 43 to 63 (CLIC…CEGC) and 79 to 98 (CSRD…CQYC). The tract at residues 147–187 (DEANMPEHTWGNNGDSDHSSPGNGVSDGNQPSPVSTLSSNR) is disordered. A compositionally biased stretch (polar residues) spans 156 to 187 (WGNNGDSDHSSPGNGVSDGNQPSPVSTLSSNR). In terms of domain architecture, NR LBD spans 230 to 461 (QSHTLIGQLV…HSCKSSLSSY (232 aa)).

Belongs to the nuclear hormone receptor family. NR6 subfamily. In terms of assembly, homodimer. Expressed in germ cells, being predominant in previtellogenic oocytes in the ovary and in spermatocytes in the testis.

The protein localises to the nucleus. Its function is as follows. Probable orphan nuclear receptor. Binds to a response element containing repeats of the motif 5'-AGGTCA-3'. This is Nuclear receptor subfamily 6 group A member 1-A from Danio rerio (Zebrafish).